A 1534-amino-acid polypeptide reads, in one-letter code: Slit homolog 1 protein (1534 aa).

The N-terminal stretch at 1-33 (MALTPGWGSSAGPVRPELWLLLWAAAWRLGASA) is a signal peptide. The region spanning 34 to 61 (CPALCTCTGTTVDCHGTGLQAIPKNIPR) is the LRRNT domain. LRR repeat units follow at residues 62–83 (NTER…DFAG), 86–107 (QLRV…AFDD), 110–131 (ELER…LFQN), 134–155 (ALSR…AFRG), 158–179 (DLKN…AFRA), and 182–203 (GLEV…SFNH). N-linked (GlcNAc...) asparagine glycosylation occurs at asparagine 72. An N-linked (GlcNAc...) asparagine glycan is attached at asparagine 192. The 51-residue stretch at 215–265 (NHLFCDCHLAWLSQWLRQRPTIGLFTQCSGPASLRGLNVAEVQKSEFSCSG) folds into the LRRCT 1 domain. An LRRNT 2 domain is found at 273–309 (PTCTLSSGSCPAMCTCSNGIVDCRGKGLTAIPANLPE). Cysteine 286 and cysteine 295 are disulfide-bonded. 5 LRR repeats span residues 310–331 (TMTE…AFSP), 334–355 (KLRR…AFQG), 358–379 (SLNS…VFGG), 382–403 (TLQL…AFQD), and 406–427 (NLSL…TFTS). Asparagine 406 is a glycosylation site (N-linked (GlcNAc...) asparagine). Residues 439-489 (NPFICDCNLKWLADFLRTNPIETSGARCASPRRLANKRIGQIKSKKFRCSA) enclose the LRRCT 2 domain. 4 disulfides stabilise this stretch: cysteine 443-cysteine 466, cysteine 445-cysteine 487, cysteine 513-cysteine 519, and cysteine 517-cysteine 526. The 37-residue stretch at 504-540 (NSECNSDVVCPHKCRCEANVVECSSLKLTKIPERIPQ) folds into the LRRNT 3 domain. LRR repeat units follow at residues 541 to 562 (STAE…GMFK), 566 to 587 (HLKK…AFEG), 590 to 611 (SVSE…MFRG), 614 to 635 (GLRT…SFTG), and 638 to 659 (NVRL…AFDT). An N-linked (GlcNAc...) asparagine glycan is attached at asparagine 571. A glycan (N-linked (GlcNAc...) asparagine) is linked at asparagine 630. An LRRCT 3 domain is found at 671–721 (NPFNCNCQLAWLGGWLRKRKIVTGNPRCQNPDFLRQIPLQDVAFPDFRCEE). Disulfide bonds link cysteine 675-cysteine 698 and cysteine 677-cysteine 719. Residues 725–761 (EGGCLPRPQCPQECACLDTVVRCSNKHLRALPKGIPK) enclose the LRRNT 4 domain. Asparagine 762, asparagine 801, and asparagine 806 each carry an N-linked (GlcNAc...) asparagine glycan. LRR repeat units follow at residues 762-783 (NVTE…LSTF), 785-806 (YLQL…SFTN), 809-830 (QLTT…AFQG), and 833-854 (SLRL…IFAD). Residues 866–916 (NPLYCDCHLRWLSSWVKTGYKEPGIARCAGPQDMEGKLLLTTPAKKFECQG) form the LRRCT 4 domain. EGF-like domains follow at residues 927-962 (DLCL…RDCE), 964-1003 (SLDS…PTCG), 1005-1041 (NTDD…KACE), 1043-1081 (LVDL…DNCS), 1083-1119 (NQDD…QLCE), and 1127-1163 (PKSP…PECE). 18 disulfide bridges follow: cysteine 929-cysteine 940, cysteine 934-cysteine 950, cysteine 952-cysteine 961, cysteine 968-cysteine 979, cysteine 973-cysteine 991, cysteine 993-cysteine 1002, cysteine 1009-cysteine 1020, cysteine 1014-cysteine 1029, cysteine 1031-cysteine 1040, cysteine 1047-cysteine 1060, cysteine 1054-cysteine 1069, cysteine 1071-cysteine 1080, cysteine 1087-cysteine 1098, cysteine 1092-cysteine 1107, cysteine 1109-cysteine 1118, cysteine 1131-cysteine 1142, cysteine 1136-cysteine 1151, and cysteine 1153-cysteine 1162. An N-linked (GlcNAc...) asparagine glycan is attached at asparagine 1026. The N-linked (GlcNAc...) asparagine glycan is linked to asparagine 1079. The 174-residue stretch at 1166 to 1339 (LSVNFVDRDT…QMKPGVVPGC (174 aa)) folds into the Laminin G-like domain. N-linked (GlcNAc...) asparagine glycans are attached at residues asparagine 1189, asparagine 1259, and asparagine 1306. 14 disulfides stabilise this stretch: cysteine 1313-cysteine 1339, cysteine 1342-cysteine 1352, cysteine 1347-cysteine 1362, cysteine 1364-cysteine 1373, cysteine 1381-cysteine 1391, cysteine 1386-cysteine 1401, cysteine 1403-cysteine 1412, cysteine 1422-cysteine 1432, cysteine 1427-cysteine 1442, cysteine 1444-cysteine 1453, cysteine 1459-cysteine 1498, cysteine 1477-cysteine 1512, cysteine 1488-cysteine 1528, and cysteine 1492-cysteine 1530. 3 EGF-like domains span residues 1340–1374 (EPCR…LHCD), 1377–1413 (ADGP…ALCN), and 1418–1454 (LAEP…ELCE). Residues 1459–1534 (CRGDPVRDFH…PTKCGCALCA (76 aa)) form the CTCK domain.

Interacts with ROBO1 and GREM1. Predominantly expressed in adult forebrain. Expressed in fetal brain, lung and kidney.

Its subcellular location is the secreted. Thought to act as molecular guidance cue in cellular migration, and function appears to be mediated by interaction with roundabout homolog receptors. During neural development involved in axonal navigation at the ventral midline of the neural tube and projection of axons to different regions. SLIT1 and SLIT2 together seem to be essential for midline guidance in the forebrain by acting as repulsive signal preventing inappropriate midline crossing by axons projecting from the olfactory bulb. The chain is Slit homolog 1 protein (SLIT1) from Homo sapiens (Human).